Here is a 427-residue protein sequence, read N- to C-terminus: tRNA(Ile)-lysidine synthase (427 aa).

ATP is bound at residue 21–26 (SGGADS).

The protein belongs to the tRNA(Ile)-lysidine synthase family.

The protein localises to the cytoplasm. The catalysed reaction is cytidine(34) in tRNA(Ile2) + L-lysine + ATP = lysidine(34) in tRNA(Ile2) + AMP + diphosphate + H(+). Ligates lysine onto the cytidine present at position 34 of the AUA codon-specific tRNA(Ile) that contains the anticodon CAU, in an ATP-dependent manner. Cytidine is converted to lysidine, thus changing the amino acid specificity of the tRNA from methionine to isoleucine. This is tRNA(Ile)-lysidine synthase from Actinobacillus succinogenes (strain ATCC 55618 / DSM 22257 / CCUG 43843 / 130Z).